An 85-amino-acid chain; its full sequence is Small ribosomal subunit protein uS15c (85 aa).

It belongs to the universal ribosomal protein uS15 family. As to quaternary structure, part of the 30S ribosomal subunit.

It is found in the plastid. The protein localises to the chloroplast. This chain is Small ribosomal subunit protein uS15c (rps15), found in Chaetosphaeridium globosum (Charophycean green alga).